Here is a 312-residue protein sequence, read N- to C-terminus: NAD-dependent protein deacylase Sirt4 (312 aa).

The transit peptide at 1 to 16 (MRVGQLLRFRSTSLRS) directs the protein to the mitochondrion. The Deacetylase sirtuin-type domain maps to 28–312 (KPVVEDDIKR…FDFRNSKSVS (285 aa)). NAD(+) contacts are provided by residues 53–73 (GAGI…VGLY) and 134–137 (QNVD). Catalysis depends on His152, which acts as the Proton acceptor. Cys160, Cys163, Cys211, and Cys214 together coordinate Zn(2+). NAD(+) is bound by residues 251–253 (GSS), 277–279 (NIG), and Cys295.

This sequence belongs to the sirtuin family. Class II subfamily. It depends on Zn(2+) as a cofactor.

Its subcellular location is the mitochondrion matrix. It carries out the reaction N(6)-acetyl-L-lysyl-[protein] + NAD(+) + H2O = 2''-O-acetyl-ADP-D-ribose + nicotinamide + L-lysyl-[protein]. In terms of biological role, NAD-dependent protein deacylase. Catalyzes the NAD-dependent hydrolysis of acyl groups from lysine residues. This is NAD-dependent protein deacylase Sirt4 (Sirt4) from Drosophila melanogaster (Fruit fly).